The primary structure comprises 1179 residues: ATP-dependent helicase/deoxyribonuclease subunit B (1179 aa).

It belongs to the helicase family. AddB/RexB type 2 subfamily. In terms of assembly, heterodimer of AddA and RexB. Mg(2+) serves as cofactor.

The heterodimer acts as both an ATP-dependent DNA helicase and an ATP-dependent, dual-direction single-stranded exonuclease. Recognizes the chi site generating a DNA molecule suitable for the initiation of homologous recombination. This subunit has 5' -&gt; 3' nuclease activity but not helicase activity. The polypeptide is ATP-dependent helicase/deoxyribonuclease subunit B (Lactobacillus delbrueckii subsp. bulgaricus (strain ATCC BAA-365 / Lb-18)).